The chain runs to 268 residues: Thiazole synthase (268 aa).

Lys-96 functions as the Schiff-base intermediate with DXP in the catalytic mechanism. 1-deoxy-D-xylulose 5-phosphate is bound by residues Gly-157, 185–186 (AG), and 207–208 (NT). A disordered region spans residues 238-268 (PMRPREAASPSSPVEGVPFTPTGPRPGRGPQ). Residues 258 to 268 (PTGPRPGRGPQ) are compositionally biased toward pro residues.

This sequence belongs to the ThiG family. In terms of assembly, homotetramer. Forms heterodimers with either ThiH or ThiS.

The protein localises to the cytoplasm. The enzyme catalyses [ThiS sulfur-carrier protein]-C-terminal-Gly-aminoethanethioate + 2-iminoacetate + 1-deoxy-D-xylulose 5-phosphate = [ThiS sulfur-carrier protein]-C-terminal Gly-Gly + 2-[(2R,5Z)-2-carboxy-4-methylthiazol-5(2H)-ylidene]ethyl phosphate + 2 H2O + H(+). Its pathway is cofactor biosynthesis; thiamine diphosphate biosynthesis. Functionally, catalyzes the rearrangement of 1-deoxy-D-xylulose 5-phosphate (DXP) to produce the thiazole phosphate moiety of thiamine. Sulfur is provided by the thiocarboxylate moiety of the carrier protein ThiS. In vitro, sulfur can be provided by H(2)S. The sequence is that of Thiazole synthase from Thermus thermophilus (strain ATCC BAA-163 / DSM 7039 / HB27).